The sequence spans 270 residues: MTSLKQQPPHLLRGIPLAVQNLKKAFGTREVLKDIDLHIPAGQFVAIVGRSGCGKSTLLRLLAGLDKPTEGQLLAGSAPLDDAREDTRLMFQEARLLPWKKVIDNVGLGLGGNWRPQALEALEAVGLAERANEWPAALSGGQKQRVALARALIHKPRLLLLDEPLGALDALTRIEMQQLIEKLWGQYGFTVLLVTHDVSEAVAIADRVILIEEGQIGLDLLVDLPRPRARGSHRLAALEAEVLNRVLAIPGSPPDPEPFSPLPTQLSWAN.

Positions 17-238 constitute an ABC transporter domain; the sequence is LAVQNLKKAF…ARGSHRLAAL (222 aa). Position 49-56 (49-56) interacts with ATP; it reads GRSGCGKS.

This sequence belongs to the ABC transporter superfamily. Aliphatic sulfonates importer (TC 3.A.1.17.2) family. As to quaternary structure, the complex is composed of two ATP-binding proteins (SsuB), two transmembrane proteins (SsuC) and a solute-binding protein (SsuA).

The protein localises to the cell inner membrane. The enzyme catalyses ATP + H2O + aliphatic sulfonate-[sulfonate-binding protein]Side 1 = ADP + phosphate + aliphatic sulfonateSide 2 + [sulfonate-binding protein]Side 1.. In terms of biological role, part of the ABC transporter complex SsuABC involved in aliphatic sulfonates import. Responsible for energy coupling to the transport system. This is Aliphatic sulfonates import ATP-binding protein SsuB 3 from Pseudomonas syringae pv. tomato (strain ATCC BAA-871 / DC3000).